We begin with the raw amino-acid sequence, 46 residues long: MAERSLSGLTEEEAVAVHAQFQTTFSAFIVLAAVAHVLVWVWKPWF.

Topologically, residues Ala-2–Phe-25 are cytoplasmic. His-18 and His-36 together coordinate a bacteriochlorophyll. Residues Ser-26–Phe-46 form a helical membrane-spanning segment.

Belongs to the antenna complex beta subunit family. As to quaternary structure, the core complex is formed by different alpha and beta chains, binding bacteriochlorophyll molecules, and arranged most probably in tetrameric structures disposed around the reaction center.

Its subcellular location is the cell inner membrane. Functionally, antenna complexes are light-harvesting systems, which transfer the excitation energy to the reaction centers. The polypeptide is Light-harvesting protein B-800/850 beta 2 chain (B2) (Magnetospirillum molischianum (Rhodospirillum molischianum)).